A 637-amino-acid polypeptide reads, in one-letter code: BUD13 homolog (637 aa).

The disordered stretch occupies residues 18–53; sequence SGTDAGLEGGPEAGRKRRKKRPKPGGAGGKGMRIVD. A Glycyl lysine isopeptide (Lys-Gly) (interchain with G-Cter in SUMO2) cross-link involves residue lysine 65. The disordered stretch occupies residues 104–470; that stretch reads LLGGHGEDGH…KKQDQDTTDL (367 aa). A compositionally biased stretch (basic and acidic residues) spans 108-119; that stretch reads HGEDGHFHHDDQ. Threonine 131 carries the post-translational modification Phosphothreonine. Serine 135 is subject to Phosphoserine. Threonine 144 bears the Phosphothreonine mark. Serine 148 carries the post-translational modification Phosphoserine. Position 157 is a phosphothreonine (threonine 157). A Phosphoserine modification is found at serine 161. Threonine 170 carries the post-translational modification Phosphothreonine. Serine 174 is modified (phosphoserine). Threonine 183 is modified (phosphothreonine). Serine 187 carries the post-translational modification Phosphoserine. A phosphothreonine mark is found at threonine 196 and threonine 209. Serine 213 bears the Phosphoserine mark. Threonine 222 is modified (phosphothreonine). A phosphoserine mark is found at serine 226, serine 238, serine 259, serine 264, serine 272, serine 284, serine 285, and serine 297. Polar residues predominate over residues 260-275; that stretch reads LGTSSPRQTHNHSPTA. The segment covering 295 to 315 has biased composition (basic and acidic residues); the sequence is HESPDLELHKAKSSKAAERAP. Residues 318-335 are compositionally biased toward polar residues; that stretch reads AASQSGLGPSHPSLSTNS. 2 positions are modified to phosphoserine: serine 341 and serine 344. Residues 353–362 show a composition bias toward basic and acidic residues; sequence AHFEAKKQLD. Serine 371, serine 373, serine 376, serine 410, and serine 426 each carry phosphoserine. Over residues 430 to 439 the composition is skewed to basic residues; that stretch reads RSPRPGKKTA. Basic and acidic residues predominate over residues 453-465; it reads VQREHQELKKQDQ. Residues 490–538 adopt a coiled-coil conformation; that stretch reads NLKLERLEQRRKAEKDSERDELYAQWGKGLAQSRQQQQNVEDAMKEMQK. Tyrosine 512 bears the Phosphotyrosine mark. Positions 553–595 are disordered; the sequence is LREQEREGDPMANFIKKNKAKENKNKKVKPRYSGPAPPPNRFN. Serine 585 bears the Phosphoserine mark.

The protein belongs to the CWC26 family. In terms of assembly, part of the activated spliceosome B/catalytic step 1 spliceosome, one of the forms of the spliceosome which has a well-formed active site but still cannot catalyze the branching reaction and is composed of at least 52 proteins, the U2, U5 and U6 snRNAs and the pre-mRNA. Component of the minor spliceosome, which splices U12-type introns.

Its subcellular location is the nucleus. Functionally, involved in pre-mRNA splicing as component of the activated spliceosome. As a component of the minor spliceosome, involved in the splicing of U12-type introns in pre-mRNAs. The sequence is that of BUD13 homolog (Bud13) from Mus musculus (Mouse).